The sequence spans 256 residues: MLWQKSTAPEQAPAPPRPYQGVRVKEPVKELLRRKRGHTSVGAAGPPTAVVLPHQPLATYSTVGPSCLDMEVSASTVTEEGTLCAGWLSQPAPATLQPLAPWTPYTEYVSHEAVSCPYSTDMYVQPVCPSYTVVGPSSVLTYASPPLITNVTPRSTATPAVGPQLEGPEHQAPLTYFPWPQPLSTLPTSSLQYQPPAPTLSGPQFVQLPISIPEPVLQDMDDPRRAISSLTIDKLLLEEEESNTYELNHTLSVEGF.

Residues 1-24 form a disordered region; the sequence is MLWQKSTAPEQAPAPPRPYQGVRV. One can recognise an OCA domain in the interval 16–38; it reads PRPYQGVRVKEPVKELLRRKRGH.

This sequence belongs to the POU2AF family. Interacts with POU2F1/OCT1 and POU2F2/OCT2; the interaction increases POU2F1 and POU2F2 transactivation activity. Post-translationally, ubiquitinated; mediated by SIAH1 or SIAH2 and leading to its subsequent proteasomal degradation. In terms of tissue distribution, B-cell specific.

Its subcellular location is the nucleus. Functionally, transcriptional coactivator that specifically associates with either POU2F1/OCT1 or POU2F2/OCT2. It boosts the POU2F1/OCT1 mediated promoter activity and to a lesser extent, that of POU2F2/OCT2. It recognizes the POU domains of POU2F1/OCT1 and POU2F2/OCT2. It is essential for the response of B-cells to antigens and required for the formation of germinal centers. Regulates IL6 expression in B cells as POU2F2/OCT2 coactivator. The protein is POU domain class 2-associating factor 1 of Mus musculus (Mouse).